A 404-amino-acid polypeptide reads, in one-letter code: MDYSEIMVRHGELSTKGKNRMRFINKLKNNIQDVLAPFPAITVRSDRDRTHVSLNGTDYQPVVEALKLVFGVQALSPVYKLEKSVPLLVTAVQDIMTSLYRDGLTFKIATKRSDHAFELDSRELNSLLGGAVFEVLPNIQAQMKHPDVTLKVEIRDEAAYISYEEIKGAGGLPVGTSGKGMLMLSGGIDSPVAGYLALKRGLDIEVVHFASPPYTSPGALAKAQDLTRRLTRFGGNIQFIEVPFTEIQEEIKNKAPEAYLMTLTRRFMMRITDAIREQRKGLVIVNGESLGQVASQTLESMQAINAVTSTPIIRPVVTMDKLEIIEMAQAIDTFDISIQPFEDCCTIFAPDRPKTNPKLGNAEKYEERFDIDGLVQRAVSGIVVTEITPEIVNDEVENLIDALL.

One can recognise a THUMP domain in the interval 60 to 165; the sequence is QPVVEALKLV…DEAAYISYEE (106 aa). ATP is bound by residues 183–184, 208–209, Arg265, Gly287, and Gln296; these read ML and HF.

It belongs to the ThiI family.

It localises to the cytoplasm. It carries out the reaction [ThiI sulfur-carrier protein]-S-sulfanyl-L-cysteine + a uridine in tRNA + 2 reduced [2Fe-2S]-[ferredoxin] + ATP + H(+) = [ThiI sulfur-carrier protein]-L-cysteine + a 4-thiouridine in tRNA + 2 oxidized [2Fe-2S]-[ferredoxin] + AMP + diphosphate. It catalyses the reaction [ThiS sulfur-carrier protein]-C-terminal Gly-Gly-AMP + S-sulfanyl-L-cysteinyl-[cysteine desulfurase] + AH2 = [ThiS sulfur-carrier protein]-C-terminal-Gly-aminoethanethioate + L-cysteinyl-[cysteine desulfurase] + A + AMP + 2 H(+). The protein operates within cofactor biosynthesis; thiamine diphosphate biosynthesis. Catalyzes the ATP-dependent transfer of a sulfur to tRNA to produce 4-thiouridine in position 8 of tRNAs, which functions as a near-UV photosensor. Also catalyzes the transfer of sulfur to the sulfur carrier protein ThiS, forming ThiS-thiocarboxylate. This is a step in the synthesis of thiazole, in the thiamine biosynthesis pathway. The sulfur is donated as persulfide by IscS. The chain is Probable tRNA sulfurtransferase from Streptococcus pyogenes serotype M5 (strain Manfredo).